The chain runs to 80 residues: Large ribosomal subunit protein bL31 (80 aa).

4 residues coordinate Zn(2+): cysteine 16, cysteine 18, cysteine 36, and cysteine 39.

It belongs to the bacterial ribosomal protein bL31 family. Type A subfamily. In terms of assembly, part of the 50S ribosomal subunit. Zn(2+) serves as cofactor.

In terms of biological role, binds the 23S rRNA. The chain is Large ribosomal subunit protein bL31 from Methylacidiphilum infernorum (isolate V4) (Methylokorus infernorum (strain V4)).